Reading from the N-terminus, the 135-residue chain is MQYGAAAEQAWYMPAAAPAPMVESAVARVERLASESAVVVFSVSSCCMCHAVKRLFCGMGVHPTVHELDLDPRGRELERALARLVGYGGPAAASPPVVPVVFIGGKLVGAMDRVMAAHINGSLVPLLKEAGALWL.

The Glutaredoxin domain occupies 26–134 (VARVERLASE…PLLKEAGALW (109 aa)). Cysteines 46 and 49 form a disulfide. Positions 132-135 (ALWL) match the Responsive for interaction with TGA factors motif.

It belongs to the glutaredoxin family. CC-type subfamily.

The protein localises to the cytoplasm. It is found in the nucleus. In terms of biological role, has a glutathione-disulfide oxidoreductase activity in the presence of NADPH and glutathione reductase. Reduces low molecular weight disulfides and proteins. This is Glutaredoxin-C3 (GRXC3) from Oryza sativa subsp. japonica (Rice).